We begin with the raw amino-acid sequence, 248 residues long: Probable transcriptional regulatory protein Pfl01_4410 (248 aa).

Belongs to the TACO1 family.

The protein localises to the cytoplasm. The chain is Probable transcriptional regulatory protein Pfl01_4410 from Pseudomonas fluorescens (strain Pf0-1).